Consider the following 80-residue polypeptide: Acyl carrier protein (80 aa).

The region spanning 4–79 is the Carrier domain; that stretch reads DEIFSKVRSI…DVVNFIKKRK (76 aa). Ser39 bears the O-(pantetheine 4'-phosphoryl)serine mark.

The protein belongs to the acyl carrier protein (ACP) family. 4'-phosphopantetheine is transferred from CoA to a specific serine of apo-ACP by AcpS. This modification is essential for activity because fatty acids are bound in thioester linkage to the sulfhydryl of the prosthetic group.

It localises to the cytoplasm. Its pathway is lipid metabolism; fatty acid biosynthesis. Functionally, carrier of the growing fatty acid chain in fatty acid biosynthesis. The chain is Acyl carrier protein from Borrelia garinii subsp. bavariensis (strain ATCC BAA-2496 / DSM 23469 / PBi) (Borreliella bavariensis).